The following is a 240-amino-acid chain: LexA repressor (240 aa).

A DNA-binding region (H-T-H motif) is located at residues 26-46; the sequence is FDEMKDALDLASKSGIHRLIT. Residues serine 160 and lysine 198 each act as for autocatalytic cleavage activity in the active site.

Belongs to the peptidase S24 family. Homodimer.

The catalysed reaction is Hydrolysis of Ala-|-Gly bond in repressor LexA.. In terms of biological role, represses a number of genes involved in the response to DNA damage (SOS response), including recA and lexA. In the presence of single-stranded DNA, RecA interacts with LexA causing an autocatalytic cleavage which disrupts the DNA-binding part of LexA, leading to derepression of the SOS regulon and eventually DNA repair. The protein is LexA repressor of Agrobacterium fabrum (strain C58 / ATCC 33970) (Agrobacterium tumefaciens (strain C58)).